The chain runs to 76 residues: RNA-binding protein KhpA (76 aa).

The KH domain maps to 29 to 76 (SLTYKLSVSKEDMGRVIGKQGRIAKAIRTLVYAVGSKNDKKIRLEIIE).

Belongs to the KhpA RNA-binding protein family. In terms of assembly, forms a complex with KhpB.

The protein localises to the cytoplasm. In terms of biological role, a probable RNA chaperone. Forms a complex with KhpB which binds to cellular RNA and controls its expression. Plays a role in peptidoglycan (PG) homeostasis and cell length regulation. The polypeptide is RNA-binding protein KhpA (Listeria innocua serovar 6a (strain ATCC BAA-680 / CLIP 11262)).